Here is a 268-residue protein sequence, read N- to C-terminus: uncharacterized protein (268 aa).

3 helical membrane passes run 169-189, 190-210, and 225-245; these read AIIY…QGFA, GVKT…LWLL, and IFAG…LSVF.

Its subcellular location is the cell membrane. This is an uncharacterized protein from Bacillus subtilis (strain 168).